Here is an 82-residue protein sequence, read N- to C-terminus: DinI-like protein (82 aa).

This sequence belongs to the DinI family.

In Enterobacteria phage VT1-Sakai, this protein is DinI-like protein.